We begin with the raw amino-acid sequence, 185 residues long: ATP synthase subunit delta (185 aa).

It belongs to the ATPase delta chain family. In terms of assembly, F-type ATPases have 2 components, F(1) - the catalytic core - and F(0) - the membrane proton channel. F(1) has five subunits: alpha(3), beta(3), gamma(1), delta(1), epsilon(1). CF(0) has four main subunits: a(1), b(1), b'(1) and c(10-14). The alpha and beta chains form an alternating ring which encloses part of the gamma chain. F(1) is attached to F(0) by a central stalk formed by the gamma and epsilon chains, while a peripheral stalk is formed by the delta, b and b' chains.

The protein localises to the cell inner membrane. Its function is as follows. F(1)F(0) ATP synthase produces ATP from ADP in the presence of a proton or sodium gradient. F-type ATPases consist of two structural domains, F(1) containing the extramembraneous catalytic core and F(0) containing the membrane proton channel, linked together by a central stalk and a peripheral stalk. During catalysis, ATP synthesis in the catalytic domain of F(1) is coupled via a rotary mechanism of the central stalk subunits to proton translocation. In terms of biological role, this protein is part of the stalk that links CF(0) to CF(1). It either transmits conformational changes from CF(0) to CF(1) or is implicated in proton conduction. The chain is ATP synthase subunit delta from Gloeobacter violaceus (strain ATCC 29082 / PCC 7421).